The primary structure comprises 314 residues: Polyamine aminopropyltransferase (314 aa).

One can recognise a PABS domain in the interval 13 to 249; that stretch reads WSWFLEWLTP…SMWGFVVASD (237 aa). Q42 is an S-methyl-5'-thioadenosine binding site. Positions 73 and 97 each coordinate spermidine. S-methyl-5'-thioadenosine-binding positions include D117 and 149-150; that span reads DA. D168 acts as the Proton acceptor in catalysis. S-methyl-5'-thioadenosine is bound at residue P177.

This sequence belongs to the spermidine/spermine synthase family. In terms of assembly, homodimer or homotetramer.

The protein localises to the cytoplasm. It carries out the reaction S-adenosyl 3-(methylsulfanyl)propylamine + putrescine = S-methyl-5'-thioadenosine + spermidine + H(+). The protein operates within amine and polyamine biosynthesis; spermidine biosynthesis; spermidine from putrescine: step 1/1. Catalyzes the irreversible transfer of a propylamine group from the amino donor S-adenosylmethioninamine (decarboxy-AdoMet) to putrescine (1,4-diaminobutane) to yield spermidine. The chain is Polyamine aminopropyltransferase from Aeropyrum pernix (strain ATCC 700893 / DSM 11879 / JCM 9820 / NBRC 100138 / K1).